Reading from the N-terminus, the 490-residue chain is GTPase Der (490 aa).

EngA-type G domains follow at residues 1–165 (MRIA…QIPV) and 227–400 (LKVA…TIAT). GTP is bound by residues 7–14 (GRPNVGKS), 54–58 (DTGGV), 117–120 (NKAD), 233–240 (GHPNVGKS), 280–284 (DTAGL), and 345–348 (NKWD). Residues 401–485 (TKLSTSLVNK…PFDLEYKAKP (85 aa)) form the KH-like domain.

This sequence belongs to the TRAFAC class TrmE-Era-EngA-EngB-Septin-like GTPase superfamily. EngA (Der) GTPase family. Associates with the 50S ribosomal subunit.

Functionally, GTPase that plays an essential role in the late steps of ribosome biogenesis. This Chlamydia trachomatis serovar L2b (strain UCH-1/proctitis) protein is GTPase Der.